The chain runs to 48 residues: Putative protein P' (48 aa).

The chain is Putative protein P' from Bos taurus (Bovine).